A 391-amino-acid polypeptide reads, in one-letter code: MRCDVVVVGAGPGGSMAAKTAAEKGLKVVLVEKRQEIGDPVRCAEGVSKARLSSMIKPDPKWIASEVKGARLYAPDGSNVVMSEDKSGDEVGYVLERKIFDRALAMDAARAGARVMVKTRALDLLRANGSVKGIRAMRYGEIIDIEADVVIGADGVESKVGRWAGIDTALKPGDIEVCAQFLLYDKGIDDEYCEFFLGNELAPGGYVWSFPKGEHLANVGLGVIGSRSEPGAPVKLLRRFVERRMPEARIVEMVVGGVPVSGPIERTIADGVMLVGDAARQSDPITGGGILNAMQAGMIAGEVVADAVSSGDTGVEGLMAYEKRWRESIGKQIARHLDLKEFFIRLSDDDLNKLMHSIQSEDVSKMDLRGMLRVLIRLNPKMLWELRHLVM.

Positions 13, 32, 43, 44, 46, 97, 121, 277, 289, and 290 each coordinate FAD.

This sequence belongs to the geranylgeranyl reductase family. DGGGPL reductase subfamily. The cofactor is FAD.

It carries out the reaction a 2,3-bis-O-phytanyl-sn-glycerol 1-phospholipid + 8 oxidized 2[4Fe-4S]-[ferredoxin] = a 2,3-bis-O-(geranylgeranyl)-sn-glycerol 1-phospholipid + 8 reduced 2[4Fe-4S]-[ferredoxin] + 16 H(+). The enzyme catalyses 2,3-bis-O-(phytanyl)-sn-glycerol 1-phosphate + 8 oxidized 2[4Fe-4S]-[ferredoxin] = 2,3-bis-O-(geranylgeranyl)-sn-glycerol 1-phosphate + 8 reduced 2[4Fe-4S]-[ferredoxin] + 16 H(+). It catalyses the reaction a 2,3-bis-O-phytanyl-sn-glycerol 1-phospholipid + 8 A = a 2,3-bis-O-(geranylgeranyl)-sn-glycerol 1-phospholipid + 8 AH2. The catalysed reaction is CDP-2,3-bis-O-(geranylgeranyl)-sn-glycerol + 8 AH2 = CDP-2,3-bis-O-(phytanyl)-sn-glycerol + 8 A. It carries out the reaction archaetidylserine + 8 AH2 = 2,3-bis-O-phytanyl-sn-glycero-3-phospho-L-serine + 8 A. It functions in the pathway membrane lipid metabolism; glycerophospholipid metabolism. Is involved in the reduction of 2,3-digeranylgeranylglycerophospholipids (unsaturated archaeols) into 2,3-diphytanylglycerophospholipids (saturated archaeols) in the biosynthesis of archaeal membrane lipids. Catalyzes the formation of archaetidic acid (2,3-di-O-phytanyl-sn-glyceryl phosphate) from 2,3-di-O-geranylgeranylglyceryl phosphate (DGGGP) via the hydrogenation of each double bond of the isoprenoid chains. Is also probably able to reduce double bonds of geranyl groups in CDP-2,3-bis-O-(geranylgeranyl)-sn-glycerol and archaetidylserine, thus acting at various stages in the biosynthesis of archaeal membrane lipids. This chain is Digeranylgeranylglycerophospholipid reductase, found in Methanothrix thermoacetophila (strain DSM 6194 / JCM 14653 / NBRC 101360 / PT) (Methanosaeta thermophila).